The following is a 341-amino-acid chain: HTH-type transcriptional repressor PurR (341 aa).

Residues 2 to 56 enclose the HTH lacI-type domain; it reads ATIKDVAKRANVSTTTVSHVINKTRFVAEETRNAVWAAIKELHYSPSAVARSLKV. The H-T-H motif DNA-binding region spans 4–23; that stretch reads IKDVAKRANVSTTTVSHVIN. Residues 48–56 mediate DNA binding; that stretch reads SAVARSLKV. Tyr-73, Arg-190, Thr-192, Phe-221, and Asp-275 together coordinate hypoxanthine.

Homodimer.

It participates in purine metabolism; purine nucleotide biosynthesis [regulation]. Is the main repressor of the genes involved in the de novo synthesis of purine nucleotides, regulating purB, purC, purEK, purF, purHD, purL, purMN and guaBA expression. PurR is allosterically activated to bind its cognate DNA by binding the purine corepressors, hypoxanthine or guanine, thereby effecting transcription repression. The chain is HTH-type transcriptional repressor PurR from Escherichia fergusonii (strain ATCC 35469 / DSM 13698 / CCUG 18766 / IAM 14443 / JCM 21226 / LMG 7866 / NBRC 102419 / NCTC 12128 / CDC 0568-73).